The primary structure comprises 370 residues: 3-isopropylmalate dehydrogenase 2 (370 aa).

77–90 is an NAD(+) binding site; the sequence is GPKWDAVPYEVRPE. Positions 97, 107, 135, and 226 each coordinate substrate. D226, D250, and D254 together coordinate Mg(2+). Position 290-302 (290-302) interacts with NAD(+); it reads GSAPDIAGKGLAN.

The protein belongs to the isocitrate and isopropylmalate dehydrogenases family. LeuB type 1 subfamily. Homodimer. It depends on Mg(2+) as a cofactor. Requires Mn(2+) as cofactor.

The protein localises to the cytoplasm. The enzyme catalyses (2R,3S)-3-isopropylmalate + NAD(+) = 4-methyl-2-oxopentanoate + CO2 + NADH. It participates in amino-acid biosynthesis; L-leucine biosynthesis; L-leucine from 3-methyl-2-oxobutanoate: step 3/4. In terms of biological role, catalyzes the oxidation of 3-carboxy-2-hydroxy-4-methylpentanoate (3-isopropylmalate) to 3-carboxy-4-methyl-2-oxopentanoate. The product decarboxylates to 4-methyl-2 oxopentanoate. The chain is 3-isopropylmalate dehydrogenase 2 from Bradyrhizobium diazoefficiens (strain JCM 10833 / BCRC 13528 / IAM 13628 / NBRC 14792 / USDA 110).